Here is a 429-residue protein sequence, read N- to C-terminus: Threonine synthase (429 aa).

An N6-(pyridoxal phosphate)lysine modification is found at Lys108.

Belongs to the threonine synthase family. Pyridoxal 5'-phosphate serves as cofactor.

The catalysed reaction is O-phospho-L-homoserine + H2O = L-threonine + phosphate. It functions in the pathway amino-acid biosynthesis; L-threonine biosynthesis; L-threonine from L-aspartate: step 5/5. Catalyzes the gamma-elimination of phosphate from L-phosphohomoserine and the beta-addition of water to produce L-threonine. The protein is Threonine synthase (thrC) of Buchnera aphidicola subsp. Schizaphis graminum (strain Sg).